The following is a 414-amino-acid chain: MAGKGRIIFHIDMNSFYASVEMAYDPSLRGKPIAVAGNVKERKGIIVTCSYEARARGVKTTMPVWRAKRLCPELIVVPPNFDRYRSSSKEMFSILREYTDLVEPVSIDEGYMDITDTPHSHRAYETAEDIQARLQKELLLPSSIGIAPNKFLAKMASDMKKPLGITILRKRELPDVLWPLPIEEMHGIGTKTAEKIKTLGIKTIGDLAKGDEHALKTLLGINGPRLKDKANGIHPAEVNPERIYEFKSVGNSSTLSHDSADWDELTGVFDRLALSVSERLQRKEVMACRLFIMIRYADWKTVTRSMTLSNPADQKKDIMEAAMELFDKHWNQNPVRLLGITGTELVEKQQAYKQLDLFSFKEDAKDEPIFQMMNELNEKYGQNLIRKGAVIKKEESKTRGTSFNRDFFQDEKKR.

The 182-residue stretch at 8–189 (IFHIDMNSFY…LPIEEMHGIG (182 aa)) folds into the UmuC domain. The Mg(2+) site is built by D12 and D108. Residue E109 is part of the active site. Positions 394-414 (EESKTRGTSFNRDFFQDEKKR) are disordered.

This sequence belongs to the DNA polymerase type-Y family. As to quaternary structure, monomer. Requires Mg(2+) as cofactor.

Its subcellular location is the cytoplasm. The catalysed reaction is DNA(n) + a 2'-deoxyribonucleoside 5'-triphosphate = DNA(n+1) + diphosphate. Its function is as follows. Poorly processive, error-prone DNA polymerase involved in untargeted mutagenesis. Copies undamaged DNA at stalled replication forks, which arise in vivo from mismatched or misaligned primer ends. These misaligned primers can be extended by PolIV. Exhibits no 3'-5' exonuclease (proofreading) activity. May be involved in translesional synthesis, in conjunction with the beta clamp from PolIII. This chain is DNA polymerase IV, found in Bacillus velezensis (strain DSM 23117 / BGSC 10A6 / LMG 26770 / FZB42) (Bacillus amyloliquefaciens subsp. plantarum).